Reading from the N-terminus, the 865-residue chain is Alanine--tRNA ligase (865 aa).

Residues His-554, His-558, Cys-656, and His-660 each contribute to the Zn(2+) site.

The protein belongs to the class-II aminoacyl-tRNA synthetase family. Requires Zn(2+) as cofactor.

Its subcellular location is the cytoplasm. The enzyme catalyses tRNA(Ala) + L-alanine + ATP = L-alanyl-tRNA(Ala) + AMP + diphosphate. Catalyzes the attachment of alanine to tRNA(Ala) in a two-step reaction: alanine is first activated by ATP to form Ala-AMP and then transferred to the acceptor end of tRNA(Ala). Also edits incorrectly charged Ser-tRNA(Ala) and Gly-tRNA(Ala) via its editing domain. The sequence is that of Alanine--tRNA ligase from Francisella tularensis subsp. tularensis (strain FSC 198).